A 469-amino-acid chain; its full sequence is Argininosuccinate lyase (469 aa).

The protein belongs to the lyase 1 family. Argininosuccinate lyase subfamily.

Its subcellular location is the cytoplasm. It catalyses the reaction 2-(N(omega)-L-arginino)succinate = fumarate + L-arginine. The protein operates within amino-acid biosynthesis; L-arginine biosynthesis; L-arginine from L-ornithine and carbamoyl phosphate: step 3/3. The chain is Argininosuccinate lyase from Burkholderia cenocepacia (strain HI2424).